A 132-amino-acid polypeptide reads, in one-letter code: D-ribose pyranase (132 aa).

The active-site Proton donor is the histidine 20. Substrate contacts are provided by residues aspartate 28, histidine 99, and 121-123; that span reads YSN.

This sequence belongs to the RbsD / FucU family. RbsD subfamily. Homodecamer.

It localises to the cytoplasm. The catalysed reaction is beta-D-ribopyranose = beta-D-ribofuranose. It participates in carbohydrate metabolism; D-ribose degradation; D-ribose 5-phosphate from beta-D-ribopyranose: step 1/2. Functionally, catalyzes the interconversion of beta-pyran and beta-furan forms of D-ribose. This is D-ribose pyranase from Streptococcus uberis (strain ATCC BAA-854 / 0140J).